The sequence spans 204 residues: 3-isopropylmalate dehydratase small subunit (204 aa).

Belongs to the LeuD family. LeuD type 1 subfamily. As to quaternary structure, heterodimer of LeuC and LeuD.

It catalyses the reaction (2R,3S)-3-isopropylmalate = (2S)-2-isopropylmalate. The protein operates within amino-acid biosynthesis; L-leucine biosynthesis; L-leucine from 3-methyl-2-oxobutanoate: step 2/4. Functionally, catalyzes the isomerization between 2-isopropylmalate and 3-isopropylmalate, via the formation of 2-isopropylmaleate. The polypeptide is 3-isopropylmalate dehydratase small subunit (Clavibacter michiganensis subsp. michiganensis (strain NCPPB 382)).